The sequence spans 206 residues: Adenylyl-sulfate kinase (206 aa).

ATP is bound at residue 31–38 (GLSASGKS). Serine 105 serves as the catalytic Phosphoserine intermediate.

It belongs to the APS kinase family.

It catalyses the reaction adenosine 5'-phosphosulfate + ATP = 3'-phosphoadenylyl sulfate + ADP + H(+). It functions in the pathway sulfur metabolism; hydrogen sulfide biosynthesis; sulfite from sulfate: step 2/3. In terms of biological role, catalyzes the synthesis of activated sulfate. The sequence is that of Adenylyl-sulfate kinase (sD) from Emericella nidulans (strain FGSC A4 / ATCC 38163 / CBS 112.46 / NRRL 194 / M139) (Aspergillus nidulans).